Consider the following 778-residue polypeptide: MKPFQLDLLFVCFFLFSQELGLQKRGCCLVLGYMAKDKFRRMNEGQVYSFSQQPQDQVVVSGQPVTLLCAIPEYDGFVLWIKDGLALGVGRDLSSYPQYLVVGNHLSGEHHLKILRAELQDDAVYECQAIQAAIRSRPARLTVLVPPDDPVILGGPVISLRAGDPLNLTCHADNAKPAASIIWLRKGEVINGATYSKTLLRDGKRESIVSTLFISPGDVENGQSIVCRATNKAIPGGKETSVTIDIQHPPLVNLSVEPQPVLEDNVVTFHCSAKANPAVTQYRWAKRGQIIKEASGEVYRTTVDYTYFSEPVSCEVTNALGSTNLSRTVDVYFGPRMTTEPQSLLVDLGSDAIFSCAWTGNPSLTIVWMKRGSGVVLSNEKTLTLKSVRQEDAGKYVCRAVVPRVGAGEREVTLTVNGPPIISSTQTQHALHGEKGQIKCFIRSTPPPDRIAWSWKENVLESGTSGRYTVETISTEEGVISTLTISNIVRADFQTIYNCTAWNSFGSDTEIIRLKEQGSEMKSGAGLEAESVPMAVIIGVAVGAGVAFLVLMATIVAFCCARSQRNLKGVVSAKNDIRVEIVHKEPASGREGEEHSTIKQLMMDRGEFQQDSVLKQLEVLKEEEKEFQNLKDPTNGYYSVNTFKEHHSTPTISLSSCQPDLRPAGKQRVPTGMSFTNIYSTLSGQGRLYDYGQRFVLGMGSSSIELCEREFQRGSLSDSSSFLDTQCDSSVSSSGKQDGYVQFDKASKASASSSHHSQSSSQNSDPSRPLQRRMQTHV.

Residues 1-21 (MKPFQLDLLFVCFFLFSQELG) form the signal peptide. At 22 to 535 (LQKRGCCLVL…GLEAESVPMA (514 aa)) the chain is on the extracellular side. Ig-like C2-type domains follow at residues 48–142 (YSFS…ARLT), 147–243 (PDDP…TSVT), 249–330 (PPLV…RTVD), 335–415 (PRMT…VTLT), and 419–515 (PPII…IRLK). A disulfide bridge links Cys-69 with Cys-127. N-linked (GlcNAc...) asparagine glycosylation is present at Asn-167. Residues Cys-170 and Cys-227 are joined by a disulfide bond. N-linked (GlcNAc...) asparagine glycosylation is present at Asn-253. Cys-271 and Cys-314 are disulfide-bonded. N-linked (GlcNAc...) asparagine glycosylation occurs at Asn-324. Cystine bridges form between Cys-356/Cys-398 and Cys-440/Cys-499. Asn-498 is a glycosylation site (N-linked (GlcNAc...) asparagine). The helical transmembrane segment at 536–556 (VIIGVAVGAGVAFLVLMATIV) threads the bilayer. Residues 557-778 (AFCCARSQRN…PLQRRMQTHV (222 aa)) are Cytoplasmic-facing. A compositionally biased stretch (polar residues) spans 727–736 (CDSSVSSSGK). The interval 727–778 (CDSSVSSSGKQDGYVQFDKASKASASSSHHSQSSSQNSDPSRPLQRRMQTHV) is disordered. The span at 748–762 (KASASSSHHSQSSSQ) shows a compositional bias: low complexity.

Belongs to the immunoglobulin superfamily. As to quaternary structure, homodimer; mediates homophilic interactions to promote cell adhesion. Interacts with NPHS1; forms heterodimers with NPHS1. Interacts with NPHS2/podocin (via the C-terminus). Interacts with CASK. Interacts (via extracellular region) with MAP1B. Interacts (via extracellular region) with MYO16. Interacts (via intracellular region) with ATP1B1. Interacts (via intracellular region) with SHMT2. Interacts (via intracellular region) with UFC1. Undergoes proteolysis by a metalloprotease and gives rise to a soluble form. In terms of tissue distribution, expressed in fetal and adult brain. Also expressed in kidney, specifically in podocytes of kidney glomeruli. Also expressed in skeletal muscle.

Its subcellular location is the cell membrane. The protein localises to the secreted. In terms of biological role, synaptic adhesion molecule required for the formation of target-specific synapses. Required for formation of target-specific synapses at hippocampal mossy fiber synapses. Required for formation of mossy fiber filopodia, the synaptic structures connecting dentate granule and GABA neurons. Probably acts as a homophilic adhesion molecule that promotes trans-cellular interactions and stabilize mossy fiber filipodia contact and subsequent synapse formation. Required for the coalescence of vomeronasal sensory neuron axons. May be involved in the hematopoietic supportive capacity of stroma cells; the secreted extracellular domain is directly responsible for supporting hematopoietic stem cells. The protein is Kin of IRRE-like protein 3 of Homo sapiens (Human).